The primary structure comprises 117 residues: Peptidyl-tRNA hydrolase (117 aa).

This sequence belongs to the PTH2 family.

Its subcellular location is the cytoplasm. It carries out the reaction an N-acyl-L-alpha-aminoacyl-tRNA + H2O = an N-acyl-L-amino acid + a tRNA + H(+). Functionally, the natural substrate for this enzyme may be peptidyl-tRNAs which drop off the ribosome during protein synthesis. The sequence is that of Peptidyl-tRNA hydrolase from Thermoplasma volcanium (strain ATCC 51530 / DSM 4299 / JCM 9571 / NBRC 15438 / GSS1).